We begin with the raw amino-acid sequence, 137 residues long: Transcription antitermination protein NusB (137 aa).

The protein belongs to the NusB family.

In terms of biological role, involved in transcription antitermination. Required for transcription of ribosomal RNA (rRNA) genes. Binds specifically to the boxA antiterminator sequence of the ribosomal RNA (rrn) operons. The chain is Transcription antitermination protein NusB from Borreliella afzelii (strain PKo) (Borrelia afzelii).